Here is a 217-residue protein sequence, read N- to C-terminus: MNLVLLGPPGGGKGTQAKRLQDKYGLVQLSTGDMLRAAVASGSEVGKKAKAVMDAGQLVSDEIVIAIIDERLDQADVAKGAIFDGFPRTVAQAEALDAMMAKKGKKLDFAIEIRVPDAYIVERITGRYTCAKCGAGYHDKFQLPQVAGKCDSCGGTEFARRPDDNVDTVTKRLDAYHAQTAPLLPYYDKKGSLKLVDGTMDIADVTKALEGILDASK.

Position 10 to 15 (Gly-10 to Thr-15) interacts with ATP. Residues Ser-30–Val-59 are NMP. Residues Thr-31, Arg-36, Gln-57–Val-59, Gly-85–Arg-88, and Gln-92 each bind AMP. The interval Gly-126 to Asp-164 is LID. An ATP-binding site is contributed by Arg-127. Residues Cys-130, Cys-133, Cys-150, and Cys-153 each coordinate Zn(2+). AMP is bound by residues Arg-161 and Arg-172. An ATP-binding site is contributed by Met-200.

The protein belongs to the adenylate kinase family. As to quaternary structure, monomer.

The protein resides in the cytoplasm. It catalyses the reaction AMP + ATP = 2 ADP. The protein operates within purine metabolism; AMP biosynthesis via salvage pathway; AMP from ADP: step 1/1. Its function is as follows. Catalyzes the reversible transfer of the terminal phosphate group between ATP and AMP. Plays an important role in cellular energy homeostasis and in adenine nucleotide metabolism. The protein is Adenylate kinase of Paramagnetospirillum magneticum (strain ATCC 700264 / AMB-1) (Magnetospirillum magneticum).